Consider the following 234-residue polypeptide: Glutathione S-transferase U16 (234 aa).

The region spanning 5 to 85 (EEVKLLGVWY…YIDETWNSSA (81 aa)) is the GST N-terminal domain. Glutathione-binding positions include 15 to 16 (SP), 42 to 43 (SK), 56 to 57 (KV), and 69 to 70 (ES). In terms of domain architecture, GST C-terminal spans 92–219 (HPYDRALARF…APEIEKVAEF (128 aa)).

The protein belongs to the GST superfamily. Tau family.

It is found in the cytoplasm. Its subcellular location is the cytosol. The enzyme catalyses RX + glutathione = an S-substituted glutathione + a halide anion + H(+). May be involved in the conjugation of reduced glutathione to a wide number of exogenous and endogenous hydrophobic electrophiles and have a detoxification role against certain herbicides. This chain is Glutathione S-transferase U16 (GSTU16), found in Arabidopsis thaliana (Mouse-ear cress).